We begin with the raw amino-acid sequence, 495 residues long: Histidine--tRNA ligase (495 aa).

This sequence belongs to the class-II aminoacyl-tRNA synthetase family. Homodimer.

Its subcellular location is the cytoplasm. The enzyme catalyses tRNA(His) + L-histidine + ATP = L-histidyl-tRNA(His) + AMP + diphosphate + H(+). This chain is Histidine--tRNA ligase, found in Ruegeria pomeroyi (strain ATCC 700808 / DSM 15171 / DSS-3) (Silicibacter pomeroyi).